A 250-amino-acid polypeptide reads, in one-letter code: Acidic leucine-rich nuclear phosphoprotein 32 family member E (250 aa).

A Phosphoserine modification is found at Ser-8. 3 LRR repeats span residues 43–64 (ELEFLSMVNVGLTSLAKLPSLP), 65–87 (KLRKLELSDNNISGTLETLAEKC), and 89–110 (NLTYLNLSGNKIKELSTLEALQ). Residues 123-161 (CEITTLEDYRESIFELLPQVTYLDGFDAEDNEAPDSEAD) enclose the LRRCT domain. Composition is skewed to acidic residues over residues 149-171 (DAEDNEAPDSEADDDDDDEDGDE), 178-191 (EYEEEEEEDEEGSE), and 205-227 (IQDEEDDDDYVEEEEEEGGEEEA). The segment at 149–250 (DAEDNEAPDS…EGEDDDEDDD (102 aa)) is disordered. The tract at residues 194 to 247 (EVGLSYLMKEDIQDEEDDDDYVEEEEEEGGEEEADVRGEKRKREAEDEGEDDDE) is ZID domain. Residues 228–238 (DVRGEKRKREA) show a composition bias toward basic and acidic residues. Residues 239–250 (EDEGEDDDEDDD) show a composition bias toward acidic residues.

The protein belongs to the ANP32 family. In terms of assembly, component of a SWR1-like complex. Interacts with H2A.Z/H2AZ1. Post-translationally, phosphorylated. The phosphorylation is nuclear localization signal (NLS)-dependent.

It is found in the cytoplasm. The protein localises to the nucleus. In terms of biological role, histone chaperone that specifically mediates the genome-wide removal of histone H2A.Z/H2AZ1 from the nucleosome: removes H2A.Z/H2AZ1 from its normal sites of deposition, especially from enhancer and insulator regions. Not involved in deposition of H2A.Z/H2AZ1 in the nucleosome. May stabilize the evicted H2A.Z/H2AZ1-H2B dimer, thus shifting the equilibrium towards dissociation and the off-chromatin state. Inhibits activity of protein phosphatase 2A (PP2A). Does not inhibit protein phosphatase 1. May play a role in cerebellar development and synaptogenesis. In Danio rerio (Zebrafish), this protein is Acidic leucine-rich nuclear phosphoprotein 32 family member E (anp32e).